Reading from the N-terminus, the 427-residue chain is Glutamate-1-semialdehyde 2,1-aminomutase (427 aa).

Lys-267 is modified (N6-(pyridoxal phosphate)lysine).

It belongs to the class-III pyridoxal-phosphate-dependent aminotransferase family. HemL subfamily. As to quaternary structure, homodimer. It depends on pyridoxal 5'-phosphate as a cofactor.

The protein localises to the cytoplasm. It carries out the reaction (S)-4-amino-5-oxopentanoate = 5-aminolevulinate. It functions in the pathway porphyrin-containing compound metabolism; protoporphyrin-IX biosynthesis; 5-aminolevulinate from L-glutamyl-tRNA(Glu): step 2/2. This is Glutamate-1-semialdehyde 2,1-aminomutase from Geotalea daltonii (strain DSM 22248 / JCM 15807 / FRC-32) (Geobacter daltonii).